We begin with the raw amino-acid sequence, 220 residues long: Probable GTP-binding protein EngB (220 aa).

An EngB-type G domain is found at 24–207; sequence PQPEVAFAGR…HELIESWIAP (184 aa). GTP is bound by residues 32–39, 59–63, 81–84, 148–151, and 185–188; these read GRSNAGKS, GRTQH, DLPG, TKCD, and LFSA. Mg(2+)-binding residues include Ser39 and Thr61.

The protein belongs to the TRAFAC class TrmE-Era-EngA-EngB-Septin-like GTPase superfamily. EngB GTPase family. Mg(2+) is required as a cofactor.

Functionally, necessary for normal cell division and for the maintenance of normal septation. This Paraburkholderia phymatum (strain DSM 17167 / CIP 108236 / LMG 21445 / STM815) (Burkholderia phymatum) protein is Probable GTP-binding protein EngB.